The sequence spans 447 residues: Polyamine export protein (447 aa).

Topologically, residues 1-4 are cytoplasmic; it reads MLNS. One can recognise a CNNM transmembrane domain in the interval 1-197; the sequence is MLNSILVILC…ALAGVLRKQE (197 aa). The chain crosses the membrane as a helical span at residues 5-25; it reads ILVILCLIAVSAFFSMSEISL. Residues 26-54 are Periplasmic-facing; the sequence is AASRKIKLKLLADEGNINAQRVLNMQENP. The helical transmembrane segment at 55-75 threads the bilayer; sequence GMFFTVVQIGLNAVAILGGIV. Topologically, residues 76 to 99 are cytoplasmic; it reads GDAAFSPAFHSLFSRYMSAELSEQ. A helical membrane pass occupies residues 100–120; that stretch reads LSFILSFSLVTGMFILFADLT. Topologically, residues 121–141 are periplasmic; it reads PKRIGMIAPEAVALRIINPMR. A helical membrane pass occupies residues 142-162; the sequence is FCLYVCTPLVWFFNGLANIIF. The Cytoplasmic portion of the chain corresponds to 163–447; it reads RIFKLPMVRK…DAKDKEESVA (285 aa). 2 consecutive CBS domains span residues 216–275 and 282–343; these read MTPR…NQSL and QIRN…GLEE.

The protein belongs to the UPF0053 family. PaeA subfamily.

It localises to the cell inner membrane. In terms of biological role, involved in cadaverine and putrescine tolerance in stationary phase. May facilitate the efflux of both cadaverine and putrescine from the cytoplasm, reducing potentially toxic levels under certain stress conditions. The polypeptide is Polyamine export protein (Escherichia coli O157:H7).